A 37-amino-acid chain; its full sequence is Large ribosomal subunit protein bL36 (37 aa).

It belongs to the bacterial ribosomal protein bL36 family.

This chain is Large ribosomal subunit protein bL36, found in Micrococcus luteus (strain ATCC 4698 / DSM 20030 / JCM 1464 / CCM 169 / CCUG 5858 / IAM 1056 / NBRC 3333 / NCIMB 9278 / NCTC 2665 / VKM Ac-2230) (Micrococcus lysodeikticus).